The primary structure comprises 564 residues: Carbamoyl phosphate synthase large chain, N-terminal section (564 aa).

The carboxyphosphate synthetic domain stretch occupies residues 1–399 (MPETPNKVLI…ALQKAIRSLE (399 aa)). The ATP site is built by Arg-127, Arg-167, Gly-173, Gly-174, Glu-206, Val-208, Glu-213, Gly-239, Val-240, His-241, Gln-282, and Glu-296. Residues 131 to 325 (RAFMKKIGEP…IARIAAKIAI (195 aa)) form the ATP-grasp domain. The Mg(2+) site is built by Gln-282, Glu-296, and Asn-298. Gln-282, Glu-296, and Asn-298 together coordinate Mn(2+). The oligomerization domain stretch occupies residues 400–560 (IGEPGLGPSP…YSTYEEECEA (161 aa)).

Belongs to the CarB family. As to quaternary structure, composed of two chains; the small (or glutamine) chain promotes the hydrolysis of glutamine to ammonia, which is used by the large (or ammonia) chain to synthesize carbamoyl phosphate. Tetramer of heterodimers (alpha,beta)4. The cofactor is Mg(2+). Requires Mn(2+) as cofactor.

It carries out the reaction hydrogencarbonate + L-glutamine + 2 ATP + H2O = carbamoyl phosphate + L-glutamate + 2 ADP + phosphate + 2 H(+). It catalyses the reaction hydrogencarbonate + NH4(+) + 2 ATP = carbamoyl phosphate + 2 ADP + phosphate + 2 H(+). Its pathway is amino-acid biosynthesis; L-arginine biosynthesis; carbamoyl phosphate from bicarbonate: step 1/1. The protein operates within pyrimidine metabolism; UMP biosynthesis via de novo pathway; (S)-dihydroorotate from bicarbonate: step 1/3. Functionally, large subunit of the glutamine-dependent carbamoyl phosphate synthetase (CPSase). CPSase catalyzes the formation of carbamoyl phosphate from the ammonia moiety of glutamine, carbonate, and phosphate donated by ATP, constituting the first step of 2 biosynthetic pathways, one leading to arginine and/or urea and the other to pyrimidine nucleotides. The large subunit (synthetase) binds the substrates ammonia (free or transferred from glutamine from the small subunit), hydrogencarbonate and ATP and carries out an ATP-coupled ligase reaction, activating hydrogencarbonate by forming carboxy phosphate which reacts with ammonia to form carbamoyl phosphate. The chain is Carbamoyl phosphate synthase large chain, N-terminal section (carB1) from Methanopyrus kandleri (strain AV19 / DSM 6324 / JCM 9639 / NBRC 100938).